Reading from the N-terminus, the 118-residue chain is Elongin-B (118 aa).

The residue at position 1 (Met-1) is an N-acetylmethionine. The region spanning 1 to 66 (MDVFLMIRRH…LGECGFTSQT (66 aa)) is the Ubiquitin-like domain. The residue at position 84 (Thr-84) is a Phosphothreonine. The segment at 92–118 (PFSSPPELPDVMKPQDSGSSANEQAVQ) is disordered. Residues 107 to 118 (DSGSSANEQAVQ) show a composition bias toward polar residues. 2 positions are modified to phosphoserine: Ser-108 and Ser-111.

The protein belongs to the Elongin B family. As to quaternary structure, heterotrimer of an A (ELOA, ELOA2 or ELOA3P), ELOB and ELOC subunit. The elongin BC complex interacts with EPOP; leading to recruit the elongin BC complex to Polycomb group (PcG) target genes, thereby restricting excessive activity of the PRC2/EED-EZH2 complex. Component of multiple cullin-RING E3 ubiquitin-protein ligase complexes composed of Elongin BC (ELOB and ELOC), a cullin (either CUL2 or CUL5), a catalytic subunit (either RBX1 or RNF7/RBX2), as well as a substrate adapter protein that can be either ASB2, ASB9, ASB11, KLHDC2, KLHDC3, KLHDC10, APPBP2, FEM1A, FEM1B, FEM1C, LRR1, PCMTD1, SOCS1, SOCS2, SOCS5, SPSB1, SPSB3, ELOA, VHL, WSB1 or RAB40C. As part of the Elongin BC E3 ubiquitin ligase complex; interacts with NRBP1. May also interact with DCUN1D1, DCUN1D2, DCUN1D3 and DCUN1D5. May form oligomers as a KLHDC2/KLHDC3-ELOB-ELOC complex; this interaction is autoinhibitory for the E3 ligase complex as the substrate-binding site of KLHDC2/KLHDC3 is blocked in the oligomer. In terms of assembly, (Microbial infection) Following infection by HIV-1 virus, component of a cullin-5-RING E3 ubiquitin-protein ligase complex (ECS complex) hijacked by the HIV-1 Vif protein. (Microbial infection) Substrate adapter protein can be a viral protein such as HIV Vif. As to quaternary structure, (Microbial infection) Interacts with molluscum contagiosum virus MC132. In terms of assembly, (Microbial infection) Interacts with herpes virus 8 virus protein LANA1.

The protein localises to the nucleus. The protein operates within protein modification; protein ubiquitination. Its function is as follows. SIII, also known as elongin, is a general transcription elongation factor that increases the RNA polymerase II transcription elongation past template-encoded arresting sites. Subunit A is transcriptionally active and its transcription activity is strongly enhanced by binding to the dimeric complex of the SIII regulatory subunits B and C (elongin BC complex). In embryonic stem cells, the elongin BC complex is recruited by EPOP to Polycomb group (PcG) target genes in order generate genomic region that display both active and repressive chromatin properties, an important feature of pluripotent stem cells. Functionally, core component of multiple cullin-2 and cullin-5-RING E3 ubiquitin-protein ligase complexes (ECS complexes), which mediate the ubiquitination of target proteins. By binding to BC-box motifs it seems to link target recruitment subunits, like VHL and members of the SOCS box family, to Cullin/RBX1 modules that activate E2 ubiquitination enzymes. Component the von Hippel-Lindau ubiquitination complex CBC(VHL). A number of ECS complexes (containing either KLHDC2, KLHDC3, KLHDC10, APPBP2, FEM1A, FEM1B or FEM1C as substrate-recognition component) are part of the DesCEND (destruction via C-end degrons) pathway, which recognizes a C-degron located at the extreme C terminus of target proteins, leading to their ubiquitination and degradation. The ECS(ASB9) complex mediates ubiquitination and degradation of CKB. As part of a multisubunit ubiquitin ligase complex, polyubiquitinates monoubiquitinated POLR2A. ECS(LRR1) ubiquitinates MCM7 and promotes CMG replisome disassembly by VCP and chromatin extraction during S-phase. As part of the ECS(RAB40C) complex, mediates ANKRD28 ubiquitination and degradation, thereby inhibiting protein phosphatase 6 (PP6) complex activity and focal adhesion assembly during cell migration. In terms of biological role, (Microbial infection) Following infection by HIV-1 virus, component of a cullin-5-RING E3 ubiquitin-protein ligase complex (ECS complex) hijacked by the HIV-1 Vif protein, which catalyzes ubiquitination and degradation of APOBEC3F and APOBEC3G. The complex can also ubiquitinate APOBEC3H to some extent. The chain is Elongin-B from Homo sapiens (Human).